The chain runs to 301 residues: Ribosomal RNA small subunit methyltransferase H (301 aa).

Residues 31–33, Asp-49, Phe-76, Asp-97, and Gln-104 each bind S-adenosyl-L-methionine; that span reads GGY.

The protein belongs to the methyltransferase superfamily. RsmH family.

The protein localises to the cytoplasm. The enzyme catalyses cytidine(1402) in 16S rRNA + S-adenosyl-L-methionine = N(4)-methylcytidine(1402) in 16S rRNA + S-adenosyl-L-homocysteine + H(+). Its function is as follows. Specifically methylates the N4 position of cytidine in position 1402 (C1402) of 16S rRNA. This Ehrlichia ruminantium (strain Gardel) protein is Ribosomal RNA small subunit methyltransferase H.